The chain runs to 167 residues: Peptide deformylase (167 aa).

Fe cation is bound by residues Cys90 and His132. The active site involves Glu133. His136 serves as a coordination point for Fe cation.

This sequence belongs to the polypeptide deformylase family. Fe(2+) serves as cofactor.

The catalysed reaction is N-terminal N-formyl-L-methionyl-[peptide] + H2O = N-terminal L-methionyl-[peptide] + formate. In terms of biological role, removes the formyl group from the N-terminal Met of newly synthesized proteins. Requires at least a dipeptide for an efficient rate of reaction. N-terminal L-methionine is a prerequisite for activity but the enzyme has broad specificity at other positions. The chain is Peptide deformylase from Dehalococcoides mccartyi (strain CBDB1).